The chain runs to 461 residues: Cysteine--tRNA ligase (461 aa).

Residue C30 coordinates Zn(2+). The short motif at 32–42 (VTVYDLCHIGH) is the 'HIGH' region element. C211, H236, and E240 together coordinate Zn(2+). A 'KMSKS' region motif is present at residues 268 to 272 (KMSKS). K271 serves as a coordination point for ATP.

The protein belongs to the class-I aminoacyl-tRNA synthetase family. Monomer. Zn(2+) serves as cofactor.

The protein localises to the cytoplasm. It catalyses the reaction tRNA(Cys) + L-cysteine + ATP = L-cysteinyl-tRNA(Cys) + AMP + diphosphate. The protein is Cysteine--tRNA ligase of Shewanella sp. (strain MR-7).